The following is a 474-amino-acid chain: MSSPNTWSIGSSVYSPVFSQKMTLWILLLLSLYPGFTSQKSDDDYEDYASNKTWVLTPKVPEGDVTVILNNLLEGYDNKLRPDIGVKPTLIHTDMYVNSIGPVNAINMEYTIDIFFAQTWYDRRLKFNSTIKVLRLNSNMVGKIWIPDTFFRNSKKADAHWITTPNRMLRIWNDGRVLYTLRLTIDAECQLQLHNFPMDEHSCPLEFSSYGYPREEIVYQWKRSSVEVGDTRSWRLYQFSFVGLRNTTEVVKTTSGDYVVMSVYFDLSRRMGYFTIQTYIPCTLIVVLSWVSFWINKDAVPARTSLGITTVLTMTTLSTIARKSLPKVSYVTAMDLFVSVCFIFVFSALVEYGTLHYFVSNRKPSKDKDKKKKNPLLRMFSFKAPTIDIRPRSATIQMNNATHLQERDEEYGYECLDGKDCASFFCCFEDCRTGAWRHGRIHIRIAKMDSYARIFFPTAFCLFNLVYWVSYLYL.

Positions 1 to 38 (MSSPNTWSIGSSVYSPVFSQKMTLWILLLLSLYPGFTS) are cleaved as a signal peptide. Residues 39–274 (QKSDDDYEDY…FDLSRRMGYF (236 aa)) are Extracellular-facing. Asn-51 and Asn-128 each carry an N-linked (GlcNAc...) asparagine glycan. The cysteines at positions 189 and 203 are disulfide-linked. N-linked (GlcNAc...) asparagine glycosylation is present at Asn-246. The helical transmembrane segment at 275 to 295 (TIQTYIPCTLIVVLSWVSFWI) threads the bilayer. The Cytoplasmic segment spans residues 296-301 (NKDAVP). Residues 302–321 (ARTSLGITTVLTMTTLSTIA) form a helical membrane-spanning segment. Residues 322–333 (RKSLPKVSYVTA) lie on the Extracellular side of the membrane. The chain crosses the membrane as a helical span at residues 334-358 (MDLFVSVCFIFVFSALVEYGTLHYF). Topologically, residues 359–450 (VSNRKPSKDK…IHIRIAKMDS (92 aa)) are cytoplasmic. A Phosphoserine; by PKC modification is found at Ser-381. Residues 451 to 472 (YARIFFPTAFCLFNLVYWVSYL) traverse the membrane as a helical segment. The Extracellular portion of the chain corresponds to 473–474 (YL).

Belongs to the ligand-gated ion channel (TC 1.A.9) family. Gamma-aminobutyric acid receptor (TC 1.A.9.5) subfamily. GABRG2 sub-subfamily. Heteropentamer, formed by a combination of alpha (GABRA1-6), beta (GABRB1-3), gamma (GABRG1-3), delta (GABRD), epsilon (GABRE), rho (GABRR1-3), pi (GABRP) and theta (GABRQ) chains, each subunit exhibiting distinct physiological and pharmacological properties. Interacts with GABARAP. Interacts with KIF21B. Identified in a complex of 720 kDa composed of LHFPL4, NLGN2, GABRA1, GABRB2, GABRG2 and GABRB3. Interacts with LHFPL4. Interacts with SHISA7; interaction leads to the regulation of GABA(A) receptor trafficking, channel deactivation kinetics and pharmacology. Glycosylated. In terms of processing, palmitoylated by ZDHHC3/GODZ; required for the accumulation of GABA(A) receptors at the postsynaptic membrane of inhibitory GABAergic synapses. As to expression, expressed in brain neurons (at protein level).

Its subcellular location is the postsynaptic cell membrane. It is found in the cell membrane. The protein localises to the cell projection. It localises to the dendrite. The protein resides in the cytoplasmic vesicle membrane. The enzyme catalyses chloride(in) = chloride(out). Its activity is regulated as follows. Allosterically activated by benzodiazepines. Activated by pentobarbital. Inhibited by the antagonist bicuculline. Inhibited by zinc ions. Potentiated by histamine. Its function is as follows. Gamma subunit of the heteropentameric ligand-gated chloride channel gated by gamma-aminobutyric acid (GABA), a major inhibitory neurotransmitter in the brain. GABA-gated chloride channels, also named GABA(A) receptors (GABAAR), consist of five subunits arranged around a central pore and contain GABA active binding site(s) located at the alpha and beta subunit interface(s). When activated by GABA, GABAARs selectively allow the flow of chloride anions across the cell membrane down their electrochemical gradient. Gamma-2/GABRG2-containing GABAARs are found at both synaptic and extrasynaptic sites. Chloride influx into the postsynaptic neuron following GABAAR opening decreases the neuron ability to generate a new action potential, thereby reducing nerve transmission. GABAARs containing alpha-1 and beta-2 or -3 subunits exhibit synaptogenic activity; the gamma-2 subunit being necessary but not sufficient to induce rapid synaptic contacts formation. Extrasynaptic gamma-2-containing receptors contribute to the tonic GABAergic inhibition. GABAARs function also as histamine receptor where histamine binds at the interface of two neighboring beta subunits and potentiates GABA response in a gamma-2 subunit-controlled manner. This is Gamma-aminobutyric acid receptor subunit gamma-2 from Mus musculus (Mouse).